Here is a 152-residue protein sequence, read N- to C-terminus: UPF0225 protein YchJ (152 aa).

The protein belongs to the UPF0225 family.

This chain is UPF0225 protein YchJ, found in Escherichia coli O81 (strain ED1a).